A 668-amino-acid chain; its full sequence is DNA ligase (668 aa).

NAD(+) is bound by residues 32–36 (DAEYD), 81–82 (SL), and glutamate 111. Residue lysine 113 is the N6-AMP-lysine intermediate of the active site. NAD(+) contacts are provided by arginine 134, glutamate 171, lysine 290, and lysine 314. Zn(2+) is bound by residues cysteine 408, cysteine 411, cysteine 426, and cysteine 432. The region spanning 591–668 (EEDLSLKGQT…DEEALIAILS (78 aa)) is the BRCT domain.

This sequence belongs to the NAD-dependent DNA ligase family. LigA subfamily. Mg(2+) is required as a cofactor. The cofactor is Mn(2+).

It catalyses the reaction NAD(+) + (deoxyribonucleotide)n-3'-hydroxyl + 5'-phospho-(deoxyribonucleotide)m = (deoxyribonucleotide)n+m + AMP + beta-nicotinamide D-nucleotide.. In terms of biological role, DNA ligase that catalyzes the formation of phosphodiester linkages between 5'-phosphoryl and 3'-hydroxyl groups in double-stranded DNA using NAD as a coenzyme and as the energy source for the reaction. It is essential for DNA replication and repair of damaged DNA. The chain is DNA ligase from Shewanella pealeana (strain ATCC 700345 / ANG-SQ1).